A 185-amino-acid polypeptide reads, in one-letter code: Protein GrpE (185 aa).

A disordered region spans residues 1–22 (MTASQEPVDQAPESNEPAPAVP).

Belongs to the GrpE family. As to quaternary structure, homodimer.

It localises to the cytoplasm. Participates actively in the response to hyperosmotic and heat shock by preventing the aggregation of stress-denatured proteins, in association with DnaK and GrpE. It is the nucleotide exchange factor for DnaK and may function as a thermosensor. Unfolded proteins bind initially to DnaJ; upon interaction with the DnaJ-bound protein, DnaK hydrolyzes its bound ATP, resulting in the formation of a stable complex. GrpE releases ADP from DnaK; ATP binding to DnaK triggers the release of the substrate protein, thus completing the reaction cycle. Several rounds of ATP-dependent interactions between DnaJ, DnaK and GrpE are required for fully efficient folding. The sequence is that of Protein GrpE from Bordetella petrii (strain ATCC BAA-461 / DSM 12804 / CCUG 43448).